We begin with the raw amino-acid sequence, 134 residues long: NADH-quinone oxidoreductase subunit A (134 aa).

3 helical membrane-spanning segments follow: residues 14–34 (FFMF…LSWI), 66–86 (FYLI…LYAW), and 96–116 (IGFS…FYLV).

The protein belongs to the complex I subunit 3 family. NDH-1 is composed of 13 different subunits. Subunits NuoA, H, J, K, L, M, N constitute the membrane sector of the complex.

The protein resides in the cell membrane. It catalyses the reaction a quinone + NADH + 5 H(+)(in) = a quinol + NAD(+) + 4 H(+)(out). Its function is as follows. NDH-1 shuttles electrons from NADH, via FMN and iron-sulfur (Fe-S) centers, to quinones in the respiratory chain. The immediate electron acceptor for the enzyme in this species is believed to be ubiquinone. Couples the redox reaction to proton translocation (for every two electrons transferred, four hydrogen ions are translocated across the cytoplasmic membrane), and thus conserves the redox energy in a proton gradient. In Buchnera aphidicola subsp. Acyrthosiphon pisum (strain APS) (Acyrthosiphon pisum symbiotic bacterium), this protein is NADH-quinone oxidoreductase subunit A.